A 403-amino-acid polypeptide reads, in one-letter code: Signal-transducing adaptor protein 2 (403 aa).

The PH domain maps to 18–130 (PSHYYESFLE…VPTDLTLLPG (113 aa)). Tyr-22 carries the post-translational modification Phosphotyrosine; by SRC. An SH2 domain is found at 133–248 (YMMSEVLAKE…KALVPFLLDE (116 aa)). Position 250 is a phosphotyrosine; by PTK6 (Tyr-250). The tract at residues 270 to 308 (APSAPGPGPAPCTGGPKPLSPASSQDKLPPLPPLPNQEE) is disordered. Residue Tyr-310 is modified to Phosphotyrosine. Phosphotyrosine; by SRC is present on Tyr-322. The interval 331–374 (SWPVILKPKKLPKPPAKLPKPPVGPKPEPKVFNGGLGRKLPVSS) is disordered. The span at 343-356 (KPPAKLPKPPVGPK) shows a compositional bias: pro residues. Positions 382–402 (AGLADMTAELQKKLEKRRALE) form a coiled coil.

Interacts with PTK6 and CSF1R. Phosphorylated on tyrosine. Tyr-250 may be important for interaction with kinases. Phosphorylated by PTK6 at Tyr-250 modulates PTK6-mediated STAT3 activation. Tyr-22 and Tyr-322 appears to be phosphorylated by SRC. Widely expressed.

It localises to the cytoplasm. Substrate of protein kinase PTK6. May play a regulatory role in the acute-phase response in systemic inflammation and may modulate STAT3 activity. The sequence is that of Signal-transducing adaptor protein 2 (STAP2) from Homo sapiens (Human).